Here is a 1399-residue protein sequence, read N- to C-terminus: DNA-directed RNA polymerase subunit beta' (1399 aa).

Zn(2+) contacts are provided by C71, C73, C86, and C89. D462, D464, and D466 together coordinate Mg(2+). Residues C810, C884, C891, and C894 each coordinate Zn(2+). The interval 1376–1399 is disordered; sequence EREKQAAITPAAPEAEPLALPPAE.

This sequence belongs to the RNA polymerase beta' chain family. As to quaternary structure, the RNAP catalytic core consists of 2 alpha, 1 beta, 1 beta' and 1 omega subunit. When a sigma factor is associated with the core the holoenzyme is formed, which can initiate transcription. Requires Mg(2+) as cofactor. Zn(2+) serves as cofactor.

It carries out the reaction RNA(n) + a ribonucleoside 5'-triphosphate = RNA(n+1) + diphosphate. DNA-dependent RNA polymerase catalyzes the transcription of DNA into RNA using the four ribonucleoside triphosphates as substrates. This is DNA-directed RNA polymerase subunit beta' from Afipia carboxidovorans (strain ATCC 49405 / DSM 1227 / KCTC 32145 / OM5) (Oligotropha carboxidovorans).